A 35-amino-acid polypeptide reads, in one-letter code: Photosystem II reaction center protein M (35 aa).

Residues 7 to 27 traverse the membrane as a helical segment; that stretch reads GFIATILFVLVPTVFLLILYI.

This sequence belongs to the PsbM family. As to quaternary structure, PSII is composed of 1 copy each of membrane proteins PsbA, PsbB, PsbC, PsbD, PsbE, PsbF, PsbH, PsbI, PsbJ, PsbK, PsbL, PsbM, PsbT, PsbX, PsbY, PsbZ, Psb30/Ycf12, peripheral proteins PsbO, CyanoQ (PsbQ), PsbU, PsbV and a large number of cofactors. It forms dimeric complexes.

It localises to the cellular thylakoid membrane. One of the components of the core complex of photosystem II (PSII). PSII is a light-driven water:plastoquinone oxidoreductase that uses light energy to abstract electrons from H(2)O, generating O(2) and a proton gradient subsequently used for ATP formation. It consists of a core antenna complex that captures photons, and an electron transfer chain that converts photonic excitation into a charge separation. This subunit is found at the monomer-monomer interface. The chain is Photosystem II reaction center protein M from Crocosphaera subtropica (strain ATCC 51142 / BH68) (Cyanothece sp. (strain ATCC 51142)).